We begin with the raw amino-acid sequence, 143 residues long: MFMGEYDHQLDTKGRMIIPSKFRYDLNERFIITRGLDKCLFGYTLDEWQQIEEKMKTLPMTKKDARKFMRMFFSGAVEVELDKQGRINIPQNLRKYANLTKECTVIGVSNRIEIWDRETWNDFYEESEESFEDIAEDLIDFDF.

2 consecutive SpoVT-AbrB domains span residues 5 to 47 (EYDH…TLDE) and 76 to 119 (AVEV…DRET).

The protein belongs to the MraZ family. Forms oligomers.

Its subcellular location is the cytoplasm. The protein resides in the nucleoid. The polypeptide is Transcriptional regulator MraZ (Staphylococcus aureus (strain Mu3 / ATCC 700698)).